The chain runs to 145 residues: Transcription antitermination protein NusB (145 aa).

The protein belongs to the NusB family.

Functionally, involved in transcription antitermination. Required for transcription of ribosomal RNA (rRNA) genes. Binds specifically to the boxA antiterminator sequence of the ribosomal RNA (rrn) operons. The protein is Transcription antitermination protein NusB of Thiobacillus denitrificans (strain ATCC 25259 / T1).